The following is a 636-amino-acid chain: Threonine--tRNA ligase (636 aa).

In terms of domain architecture, TGS spans 1–61 (MINITLPDGK…ETDASVVFIT (61 aa)). Residues 238–528 (DHRKLGTALD…LIEHYAGKFP (291 aa)) are catalytic. Cys329, His380, and His505 together coordinate Zn(2+).

The protein belongs to the class-II aminoacyl-tRNA synthetase family. In terms of assembly, homodimer. It depends on Zn(2+) as a cofactor.

The protein resides in the cytoplasm. It catalyses the reaction tRNA(Thr) + L-threonine + ATP = L-threonyl-tRNA(Thr) + AMP + diphosphate + H(+). Catalyzes the attachment of threonine to tRNA(Thr) in a two-step reaction: L-threonine is first activated by ATP to form Thr-AMP and then transferred to the acceptor end of tRNA(Thr). Also edits incorrectly charged L-seryl-tRNA(Thr). This chain is Threonine--tRNA ligase, found in Desulfatibacillum aliphaticivorans.